Reading from the N-terminus, the 653-residue chain is Endoglin (653 aa).

An N-terminal signal peptide occupies residues 1–24 (MDRGVLPQAIALLLAVCSFGPTAG). The Extracellular segment spans residues 25 to 581 (LAEGVQCDLQ…IVSPGLPDKG (557 aa)). The OR1, N-terminal part stretch occupies residues 27–44 (EGVQCDLQPVDPKVTYTT). The required for interaction with GDF2 stretch occupies residues 27 to 336 (EGVQCDLQPV…RSCGSGLQPS (310 aa)). 7 disulfides stabilise this stretch: Cys-31/Cys-206, Cys-51/Cys-181, Cys-241/Cys-329, Cys-349/Cys-381, Cys-362/Cys-442, Cys-393/Cys-411, and Cys-493/Cys-549. The segment at 45–198 (SQVSEGCVAH…MGHTLEWKSH (154 aa)) is OR2. A glycan (N-linked (GlcNAc...) asparagine) is linked at Asn-57. The interval 199 to 329 (TQASVLGCHL…SVISLQDRSC (131 aa)) is OR1, C-terminal part. The tract at residues 269–281 (KAWTTGEYSFKIF) is essential for interaction with GDF2. The N-linked (GlcNAc...) asparagine glycan is linked to Asn-306. A ZP domain is found at 362–512 (CSDDVMTLVL…MVDLIQNQEA (151 aa)). The helical transmembrane segment at 582-606 (LVLPAVLGITFGAFLIGALLTAALW) threads the bilayer. At 607 to 653 (YIHSHTRHPGKREPVVAVAAPASSESSSTNHSIGSTQSTPCSTSSMA) the chain is on the cytoplasmic side. Over residues 625–634 (AAPASSESSS) the composition is skewed to low complexity. The disordered stretch occupies residues 625 to 653 (AAPASSESSSTNHSIGSTQSTPCSTSSMA). The segment covering 635 to 653 (TNHSIGSTQSTPCSTSSMA) has biased composition (polar residues). Phosphoserine; by TGFBR1 occurs at positions 641 and 644.

In terms of assembly, homodimer; disulfide-linked. Forms a heteromeric complex with the signaling receptors for transforming growth factor-beta: TGFBR1 and/or TGFBR2. It is able to bind TGFB1 and TGFB2 with high affinity, but not TGFB3. Interacts with GDF2, forming a heterotetramer with a 2:2 stoichiometry. Interacts with ACVRL1. Can form a heteromeric complex with GDF2 and ACVRL1. Interacts with BMP10. Interacts with DYNLT4. Interacts with ARRB2.

Its subcellular location is the cell membrane. In terms of biological role, vascular endothelium glycoprotein that plays an important role in the regulation of angiogenesis. Required for normal structure and integrity of adult vasculature. Regulates the migration of vascular endothelial cells. Required for normal extraembryonic angiogenesis and for embryonic heart development. May regulate endothelial cell shape changes in response to blood flow, which drive vascular remodeling and establishment of normal vascular morphology during angiogenesis. May play a role in the binding of endothelial cells to integrins. Acts as a TGF-beta coreceptor and is involved in the TGF-beta/BMP signaling cascade that ultimately leads to the activation of SMAD transcription factors. Required for GDF2/BMP9 signaling through SMAD1 in endothelial cells and modulates TGFB1 signaling through SMAD3. This chain is Endoglin (ENG), found in Sus scrofa (Pig).